A 568-amino-acid polypeptide reads, in one-letter code: Zinc finger protein 76 (568 aa).

Lys24 participates in a covalent cross-link: Glycyl lysine isopeptide (Lys-Gly) (interchain with G-Cter in SUMO2). 3 tandem repeats follow at residues 34–45 (IQLEDGTTAYIH), 62–73 (VQLEDGSMAYIH), and 88–99 (VQLEDGSTAYIH). Positions 34 to 99 (IQLEDGTTAY…LEDGSTAYIH (66 aa)) are 3 X 12 AA approximate repeats. C2H2-type zinc fingers lie at residues 165–189 (FRCG…ERAH), 195–219 (YRCD…VRTH), 225–249 (YKCP…VRTH), 255–279 (FRCP…VRTH), 285–309 (YTCP…VRIH), 315–339 (YVCT…HVVH), and 345–368 (YTCS…RSAH). The segment at 365–401 (RSAHGELEATEESEQALYEQQQLEAASAAEESPSPKP) is disordered. Residues 379-396 (QALYEQQQLEAASAAEES) show a composition bias toward low complexity.

The protein belongs to the krueppel C2H2-type zinc-finger protein family.

The protein resides in the nucleus. Its function is as follows. May be involved in transcriptional regulation. The polypeptide is Zinc finger protein 76 (Znf76) (Rattus norvegicus (Rat)).